Reading from the N-terminus, the 550-residue chain is MAAQRHIDINSTQVWAKLHQHQRATRHMHMRELFELDPQRFQRFSLELDGLLLDYSKNRVTERTLELLFDLARKADLRGWMDRMRSGERINVSENRSVLHTALRLPAGARLDLEGHNVAADVHQVLARLKDFSEQVREGRWLGFAGQPIRDVVNLGIGGSDLGPLVAADALAAYAHPDLKVHFVSNVDGQHLARTLERLNPATTLFIVASKSFTTPETLLNAQAARAWFLQAAGEAQIAKHFVAVSTNEPAVRAFGIDPQHMFGFWDWVGGRYSVWSAIGLPVMLSIGYDNFRAFLDGGHAMDRHFFESPFDANMPVLLALIGIWYNTFYRAHTHAIMPYDHGLRRLPAHIQQLDMESNGKRVGRLGEALDFDTGPVIWGEEGANSQHAFFQLLHQGTRLVPCDFILPLNSHYPLGNQHDVLVANCLAQTEALMRGKNEAEVMRELSHLSGEQLDMLLPQKLFPGNQPSNTLALDRVTPYSMGMLMALYEHKVFVQGVIWGINSFDQWGVEYGKQLARRILPELSGDTGALGHDSSTNGLIRHYRERHGK.

Residue Glu357 is the Proton donor of the active site. Residues His388 and Lys514 contribute to the active site. The tract at residues 527 to 550 (DTGALGHDSSTNGLIRHYRERHGK) is disordered.

It belongs to the GPI family.

The protein localises to the cytoplasm. The catalysed reaction is alpha-D-glucose 6-phosphate = beta-D-fructose 6-phosphate. Its pathway is carbohydrate biosynthesis; gluconeogenesis. The protein operates within carbohydrate degradation; glycolysis; D-glyceraldehyde 3-phosphate and glycerone phosphate from D-glucose: step 2/4. Its function is as follows. Catalyzes the reversible isomerization of glucose-6-phosphate to fructose-6-phosphate. This Chromobacterium violaceum (strain ATCC 12472 / DSM 30191 / JCM 1249 / CCUG 213 / NBRC 12614 / NCIMB 9131 / NCTC 9757 / MK) protein is Glucose-6-phosphate isomerase 2.